The following is a 918-amino-acid chain: Protein translocase subunit SecA (918 aa).

Residues Gln-87, 105-109 (GEGKT), and Asp-516 contribute to the ATP site. Residues Cys-902, Cys-904, Cys-913, and His-914 each coordinate Zn(2+).

It belongs to the SecA family. As to quaternary structure, monomer and homodimer. Part of the essential Sec protein translocation apparatus which comprises SecA, SecYEG and auxiliary proteins SecDF-YajC and YidC. Zn(2+) serves as cofactor.

The protein localises to the cell inner membrane. It localises to the cytoplasm. The catalysed reaction is ATP + H2O + cellular proteinSide 1 = ADP + phosphate + cellular proteinSide 2.. Part of the Sec protein translocase complex. Interacts with the SecYEG preprotein conducting channel. Has a central role in coupling the hydrolysis of ATP to the transfer of proteins into and across the cell membrane, serving both as a receptor for the preprotein-SecB complex and as an ATP-driven molecular motor driving the stepwise translocation of polypeptide chains across the membrane. This is Protein translocase subunit SecA from Methylibium petroleiphilum (strain ATCC BAA-1232 / LMG 22953 / PM1).